We begin with the raw amino-acid sequence, 366 residues long: Histidinol-phosphate aminotransferase 2 (366 aa).

A disordered region spans residues 1-21 (MQVKDQLSLLQPYKPGKSPEQ). Lysine 222 carries the post-translational modification N6-(pyridoxal phosphate)lysine.

Belongs to the class-II pyridoxal-phosphate-dependent aminotransferase family. Histidinol-phosphate aminotransferase subfamily. In terms of assembly, homodimer. Pyridoxal 5'-phosphate is required as a cofactor.

The catalysed reaction is L-histidinol phosphate + 2-oxoglutarate = 3-(imidazol-4-yl)-2-oxopropyl phosphate + L-glutamate. It participates in amino-acid biosynthesis; L-histidine biosynthesis; L-histidine from 5-phospho-alpha-D-ribose 1-diphosphate: step 7/9. The protein is Histidinol-phosphate aminotransferase 2 of Bacillus cereus (strain ZK / E33L).